We begin with the raw amino-acid sequence, 448 residues long: MEGSKASSSTMQVSFVCQRCSQPLKLDTSFKILDRVTIQELTAPLLTTAQAKPGETQEEEANSGEEPFIETRQDGVSRRFIPPARMMSTESANSFTLIGEASDGGTMENLSRRLKVTGDLFDIMSGQTDVDHPLCEECTDTLLDQLDTQLNVTENECQNYKRCLEILEQMNEDDSEQLQRELKELALEEERLIQELEDVEKNRKVVAENLEKVQAEAERLDQEEAQYQREYSEFKRQQLELDDELKSVENQVRYAQIQLDKLKKTNVFNATFHIWHSGQFGTINNFRLGRLPSVPVEWNEINAAWGQTVLLLHALANKMGLKFQRYRLVPYGNHSYLESLTDKSKELPLYCSGGLRFFWDNKFDHAMVAFLDCVQQFKEEVEKGETRFCLPYRMDVEKGKIEDTGGSGGSYSIKTQFNSEEQWTKALKFMLTNLKWGLAWVSSQFYNK.

Residue Met1 is modified to N-acetylmethionine. Phosphoserine occurs at positions 14 and 29. Residues 47–66 (TTAQAKPGETQEEEANSGEE) form a disordered region. Phosphoserine; by AMPK is present on residues Ser88, Ser91, and Ser94. The short motif at 106-125 (TMENLSRRLKVTGDLFDIMS) is the BH3 element. An interaction with BCL2 and BCL2L1 isoform Bcl-X(L) region spans residues 110–157 (LSRRLKVTGDLFDIMSGQTDVDHPLCEECTDTLLDQLDTQLNVTENEC). Thr117 carries the phosphothreonine; by DAPK1 modification. The stretch at 140 to 268 (DTLLDQLDTQ…LDKLKKTNVF (129 aa)) forms a coiled coil. The tract at residues 243-448 (DELKSVENQV…AWVSSQFYNK (206 aa)) is evolutionary conserved domain (ECD). Glycyl lysine isopeptide (Lys-Gly) (interchain with G-Cter in ubiquitin) cross-links involve residues Lys400 and Lys435. Residues 423-448 (WTKALKFMLTNLKWGLAWVSSQFYNK) form a required for membrane-association region.

Belongs to the beclin family. As to quaternary structure, a homodimeric form is proposed to exist; this metastable form readily transits to ATG14- or UVRAG-containing complexes with BECN1:UVRAG being more stable than BECN1:ATG14. Component of the PI3K (PI3KC3/PI3K-III/class III phosphatidylinositol 3-kinase) complex whose core is composed of the catalytic subunit PIK3C3, the regulatory subunit PIK3R4 and BECN1, and associates with additional regulatory/auxiliary subunits to form alternative complex forms. Accepted alternative complex forms containing a fourth regulatory subunit in a mutually exclusive manner are PI3K complex I (PI3KC3-C1) containing ATG14, and PI3K complex II (PI3KC3-C2) containing UVRAG. PI3KC3-C1 displays a V-shaped architecture with PIK3R4 serving as a bridge between PIK3C3 and the ATG14:BECN1 subcomplex. Both, PI3KC3-C1 and PI3KC3-C2, can associate with further regulatory subunits, such as RUBCN, SH3GLB1/Bif-1 and AMBRA1. PI3KC3-C1 probably associates with PIK3CB. Forms a complex with PPP2CA and AMBRA1; AMBRA1 and BECN1 components of the complex regulate MYC stability via different pathways. Component of the complex, at least composed of LRPPRC, BECN1 and BCL2; the interactions prevent BECN1 from forming an autophagy-inducing complex with PIK3C3. Interacts with AMBRA1, GOPC, GRID2 and PIK3CB. Interacts with BCL2 and BCL2L1 isoform Bcl-X(L); the interaction inhibits BECN1 function in promoting autophagy by interfering with the formation of the PI3K complex. Interacts with cytosolic HMGB1; inhibits the interaction of BECN1 and BCL2 leading to promotion of autophagy. Interacts with USP10, USP13, VMP1, DAPK1. Interacts with the poly-Gln domain of ATXN3; the interaction causes deubiquitination at Lys-400 and stabilizes BECN1. Interacts with SLAMF1. Interacts with TRIM5; the interaction causes activation of BECN1 by causing its dissociation from its inhibitors BCL2 and TAB2. Interacts with active ULK1 (phosphorylated on 'Ser-317') and MEFV simultaneously. Interacts with TRIM50. Interacts with TRIM16. Interacts with WDR81 and WDR91; negatively regulates the PI3 kinase/PI3K activity associated with endosomal membranes. Interacts with LAPTM4B; competes with EGFR for LAPTM4B binding; regulates EGFR activity. Interacts with ATG14; this interaction is increased in the absence of TMEM39A. Interacts with WASHC1; preventing interaction with AMBRA1 and the DCX(AMBRA1) complex and subsequent ubiquitination. Interacts with TRIM17. Interacts with BCL2L10/BCL-B (via BH1 domain). Interacts with SH3BGRL. Interacts with Irgm1; enhancing BECN1-interacting partners and influencing the composition of the BECN1 complex. Interacts with ARMC3. Interacts with LRPPRC. In terms of assembly, (Microbial infection) Interacts with murine gammaherpesvirus 68 M11; the viral protein binds BECN1 with higher affinity than cellular BCL2. In terms of processing, phosphorylation at Thr-117 by DAPK1 reduces its interaction with BCL2 and BCL2L1 and promotes induction of autophagy. In response to autophagic stimuli, phosphorylated at serine residues by AMPK in an ATG14-dependent manner, and this phosphorylation is critical for maximally efficient autophagy. Post-translationally, polyubiquitinated by NEDD4, both with 'Lys-11'- and 'Lys-63'-linkages. 'Lys-11'-linked polyubiquitination leads to degradation and is enhanced when the stabilizing interaction partner VPS34 is depleted. Deubiquitinated by USP10 and USP13, leading to stabilize the PIK3C3/VPS34-containing complexes. Polyubiquitinated at Lys-400 with 'Lys-48'-linkages. 'Lys-48'-linked poyubiquitination of Lys-400 leads to degradation. Deubiquitinated by ATXN3, leading to stabilization. Ubiquitinated at Lys-435 via 'Lys-63'-linkage by the DCX(AMBRA1) complex, thereby increasing the association between BECN1 and PIK3C3 to promote PIK3C3 activity. 'Lys-48'-linked ubiquitination by RNF216 leads to proteasomal degradation and autophagy inhibition. Proteolytically processed by caspases including CASP8 and CASP3; the C-terminal fragments lack autophagy-inducing capacity and are proposed to induce apoptosis. Thus the cleavage is proposed to be an determinant to switch from autophagy to apoptosis pathways affecting cellular homeostasis including viral infections and survival of tumor cells.

Its subcellular location is the cytoplasm. It localises to the golgi apparatus. It is found in the trans-Golgi network membrane. The protein localises to the endosome membrane. The protein resides in the endoplasmic reticulum membrane. Its subcellular location is the mitochondrion membrane. It localises to the endosome. It is found in the cytoplasmic vesicle. The protein localises to the autophagosome. The protein resides in the mitochondrion. Its subcellular location is the nucleus. In terms of biological role, plays a central role in autophagy. Acts as a core subunit of different PI3K complex forms that mediate formation of phosphatidylinositol 3-phosphate and are believed to play a role in multiple membrane trafficking pathways: PI3KC3-C1 is involved in initiation of autophagosomes and PI3KC3-C2 in maturation of autophagosomes and endocytosis. Involved in regulation of degradative endocytic trafficking and required for the abscission step in cytokinesis, probably in the context of PI3KC3-C2. Essential for the formation of PI3KC3-C2 but not PI3KC3-C1 PI3K complex forms. Involved in endocytosis including endosome formation in neuronal cells. May play a role in antiviral host defense. Functionally, beclin-1-C 35 kDa localized to mitochondria can promote apoptosis; it induces the mitochondrial translocation of BAX and the release of proapoptotic factors. The polypeptide is Beclin-1 (Becn1) (Mus musculus (Mouse)).